A 106-amino-acid polypeptide reads, in one-letter code: MALDPADQHLRHVEKDVLIPKIMREKAKERCSEQVQDFTKCCKNSGVLMVVKCRKENSALKECLTAYYNDPAFYEECKMEYLKEREEFRKTGIPTKKRLQKLPTSM.

Position 2 is an N-acetylalanine (Ala-2). The CHCH domain maps to Lys-28–Pro-71. 2 consecutive short sequence motifs (cx9C motif) follow at residues Cys-31–Cys-41 and Cys-53–Cys-63. Cystine bridges form between Cys-31–Cys-63 and Cys-41–Cys-53.

This sequence belongs to the CMC family. In terms of assembly, component of the MITRAC (mitochondrial translation regulation assembly intermediate of cytochrome c oxidase complex) complex, the core components of this complex being COA3/MITRAC12 and COX14.

It localises to the mitochondrion. Its function is as follows. Component of the MITRAC (mitochondrial translation regulation assembly intermediate of cytochrome c oxidase complex) complex, that regulates cytochrome c oxidase assembly. The protein is COX assembly mitochondrial protein homolog (CMC1) of Homo sapiens (Human).